The chain runs to 753 residues: 5-methyltetrahydropteroyltriglutamate--homocysteine methyltransferase (753 aa).

Residues 17–20 (RELK) and Lys117 each bind 5-methyltetrahydropteroyltri-L-glutamate. L-homocysteine is bound by residues 431 to 433 (IGS) and Glu484. Residues 431 to 433 (IGS) and Glu484 contribute to the L-methionine site. 5-methyltetrahydropteroyltri-L-glutamate-binding positions include 515–516 (RC) and Trp561. Asp599 contacts L-homocysteine. Asp599 lines the L-methionine pocket. A 5-methyltetrahydropteroyltri-L-glutamate-binding site is contributed by Glu605. Zn(2+)-binding residues include His641, Cys643, and Glu665. The Proton donor role is filled by His694. Cys726 serves as a coordination point for Zn(2+).

This sequence belongs to the vitamin-B12 independent methionine synthase family. Requires Zn(2+) as cofactor.

It carries out the reaction 5-methyltetrahydropteroyltri-L-glutamate + L-homocysteine = tetrahydropteroyltri-L-glutamate + L-methionine. It functions in the pathway amino-acid biosynthesis; L-methionine biosynthesis via de novo pathway; L-methionine from L-homocysteine (MetE route): step 1/1. Functionally, catalyzes the transfer of a methyl group from 5-methyltetrahydrofolate to homocysteine resulting in methionine formation. This Shigella boydii serotype 18 (strain CDC 3083-94 / BS512) protein is 5-methyltetrahydropteroyltriglutamate--homocysteine methyltransferase.